Here is a 434-residue protein sequence, read N- to C-terminus: Adenylosuccinate synthetase (434 aa).

GTP contacts are provided by residues 25 to 31 and 53 to 55; these read GDEGKGK and GHT. D26 serves as the catalytic Proton acceptor. 2 residues coordinate Mg(2+): D26 and G53. IMP contacts are provided by residues 26-29, 51-54, T142, R156, N233, T248, and R312; these read DEGK and NAGH. Residue H54 is the Proton donor of the active site. 308–314 contributes to the substrate binding site; it reads VTTGRKR. GTP is bound by residues R314, 340–342, and 422–424; these read KLD and GVG.

This sequence belongs to the adenylosuccinate synthetase family. Homodimer. Mg(2+) is required as a cofactor.

Its subcellular location is the cytoplasm. The catalysed reaction is IMP + L-aspartate + GTP = N(6)-(1,2-dicarboxyethyl)-AMP + GDP + phosphate + 2 H(+). Its pathway is purine metabolism; AMP biosynthesis via de novo pathway; AMP from IMP: step 1/2. With respect to regulation, competitively Inhibited by GMP. Allosterically inhibited by AMP. In terms of biological role, plays an important role in the de novo pathway and in the salvage pathway of purine nucleotide biosynthesis. Catalyzes the first committed step in the biosynthesis of AMP from IMP. The sequence is that of Adenylosuccinate synthetase (ade2) from Schizosaccharomyces pombe (strain 972 / ATCC 24843) (Fission yeast).